Consider the following 424-residue polypeptide: Enolase (424 aa).

(2R)-2-phosphoglycerate is bound at residue Q162. The active-site Proton donor is E204. Residues D241, E284, and D311 each coordinate Mg(2+). 4 residues coordinate (2R)-2-phosphoglycerate: K336, R365, S366, and K387. The Proton acceptor role is filled by K336.

It belongs to the enolase family. Mg(2+) serves as cofactor.

The protein localises to the cytoplasm. Its subcellular location is the secreted. The protein resides in the cell surface. It catalyses the reaction (2R)-2-phosphoglycerate = phosphoenolpyruvate + H2O. The protein operates within carbohydrate degradation; glycolysis; pyruvate from D-glyceraldehyde 3-phosphate: step 4/5. Catalyzes the reversible conversion of 2-phosphoglycerate (2-PG) into phosphoenolpyruvate (PEP). It is essential for the degradation of carbohydrates via glycolysis. The sequence is that of Enolase from Rhizobium johnstonii (strain DSM 114642 / LMG 32736 / 3841) (Rhizobium leguminosarum bv. viciae).